We begin with the raw amino-acid sequence, 130 residues long: Fumarate reductase subunit C (130 aa).

Helical transmembrane passes span 30-50 (EGTS…VFSL), 60-80 (FVSF…LFAA), and 110-130 (IKAL…VALL).

The protein belongs to the FrdC family. As to quaternary structure, part of an enzyme complex containing four subunits: a flavoprotein (FrdA), an iron-sulfur protein (FrdB), and two hydrophobic anchor proteins (FrdC and FrdD).

Its subcellular location is the cell inner membrane. Functionally, two distinct, membrane-bound, FAD-containing enzymes are responsible for the catalysis of fumarate and succinate interconversion; fumarate reductase is used in anaerobic growth, and succinate dehydrogenase is used in aerobic growth. Anchors the catalytic components of the fumarate reductase complex to the cell inner membrane, binds quinones. In Yersinia pestis bv. Antiqua (strain Angola), this protein is Fumarate reductase subunit C.